The primary structure comprises 138 residues: Thyrotropin subunit beta (138 aa).

The signal sequence occupies residues 1–20 (MTATFLMSLLFGLAFGQTMS). Intrachain disulfides connect Cys-22–Cys-72, Cys-36–Cys-87, Cys-39–Cys-125, Cys-47–Cys-103, Cys-51–Cys-105, and Cys-108–Cys-115. A glycan (N-linked (GlcNAc...) asparagine) is linked at Asn-43. The propeptide occupies 133–138 (LVGFPV).

Belongs to the glycoprotein hormones subunit beta family. As to quaternary structure, heterodimer of a common alpha chain and a unique beta chain which confers biological specificity to thyrotropin, lutropin, follitropin and gonadotropin.

Its subcellular location is the secreted. In terms of biological role, indispensable for the control of thyroid structure and metabolism. This Monodelphis domestica (Gray short-tailed opossum) protein is Thyrotropin subunit beta (TSHB).